The sequence spans 474 residues: Glutamine synthetase (474 aa).

The region spanning 15 to 99 (EDVQFIDVRF…MTFFIHDPIT (85 aa)) is the GS beta-grasp domain. In terms of domain architecture, GS catalytic spans 107-474 (PRNIAKKAET…PYEFTLYYDI (368 aa)). Residues Glu-132 and Glu-134 each contribute to the Mg(2+) site. Position 210 (Glu-210) interacts with ATP. The Mg(2+) site is built by Glu-215 and Glu-223. Residues 267 to 268 (NG) and Gly-268 each bind L-glutamate. His-272 serves as a coordination point for Mg(2+). ATP-binding positions include 274 to 276 (HSS) and Ser-276. Arg-325, Glu-331, and Arg-343 together coordinate L-glutamate. ATP-binding residues include Arg-343, Arg-348, and Lys-357. Mg(2+) is bound at residue Glu-362. Arg-364 is an L-glutamate binding site. Residue Tyr-402 is modified to O-AMP-tyrosine.

The protein belongs to the glutamine synthetase family. As to quaternary structure, oligomer of 12 subunits arranged in the form of two hexagons. It depends on Mg(2+) as a cofactor.

The protein resides in the cytoplasm. The enzyme catalyses L-glutamate + NH4(+) + ATP = L-glutamine + ADP + phosphate + H(+). The activity of this enzyme could be controlled by adenylation under conditions of abundant glutamine. Its function is as follows. Catalyzes the ATP-dependent biosynthesis of glutamine from glutamate and ammonia. The polypeptide is Glutamine synthetase (Frankia alni).